Here is a 444-residue protein sequence, read N- to C-terminus: CCA-adding enzyme (444 aa).

ATP is bound by residues S57 and R60. CTP-binding residues include S57 and R60. D69, D71, and D124 together coordinate Mg(2+). Positions 147, 168, and 177 each coordinate ATP. Residues H147, K168, and Y177 each contribute to the CTP site.

The protein belongs to the tRNA nucleotidyltransferase/poly(A) polymerase family. Archaeal CCA-adding enzyme subfamily. As to quaternary structure, homodimer. The cofactor is Mg(2+).

The enzyme catalyses a tRNA precursor + 2 CTP + ATP = a tRNA with a 3' CCA end + 3 diphosphate. It catalyses the reaction a tRNA with a 3' CCA end + 2 CTP + ATP = a tRNA with a 3' CCACCA end + 3 diphosphate. Catalyzes the addition and repair of the essential 3'-terminal CCA sequence in tRNAs without using a nucleic acid template. Adds these three nucleotides in the order of C, C, and A to the tRNA nucleotide-73, using CTP and ATP as substrates and producing inorganic pyrophosphate. tRNA 3'-terminal CCA addition is required both for tRNA processing and repair. Also involved in tRNA surveillance by mediating tandem CCA addition to generate a CCACCA at the 3' terminus of unstable tRNAs. While stable tRNAs receive only 3'-terminal CCA, unstable tRNAs are marked with CCACCA and rapidly degraded. The sequence is that of CCA-adding enzyme from Methanococcus maripaludis (strain C5 / ATCC BAA-1333).